Consider the following 505-residue polypeptide: Protein nucleotidyltransferase YdiU (505 aa).

ATP-binding residues include G102, G104, R105, K125, D137, G138, R188, and R195. The active-site Proton acceptor is D264. Residues N265 and D274 each contribute to the Mg(2+) site. An ATP-binding site is contributed by D274.

This sequence belongs to the SELO family. The cofactor is Mg(2+). It depends on Mn(2+) as a cofactor.

It catalyses the reaction L-seryl-[protein] + ATP = 3-O-(5'-adenylyl)-L-seryl-[protein] + diphosphate. The catalysed reaction is L-threonyl-[protein] + ATP = 3-O-(5'-adenylyl)-L-threonyl-[protein] + diphosphate. It carries out the reaction L-tyrosyl-[protein] + ATP = O-(5'-adenylyl)-L-tyrosyl-[protein] + diphosphate. The enzyme catalyses L-histidyl-[protein] + UTP = N(tele)-(5'-uridylyl)-L-histidyl-[protein] + diphosphate. It catalyses the reaction L-seryl-[protein] + UTP = O-(5'-uridylyl)-L-seryl-[protein] + diphosphate. The catalysed reaction is L-tyrosyl-[protein] + UTP = O-(5'-uridylyl)-L-tyrosyl-[protein] + diphosphate. Nucleotidyltransferase involved in the post-translational modification of proteins. It can catalyze the addition of adenosine monophosphate (AMP) or uridine monophosphate (UMP) to a protein, resulting in modifications known as AMPylation and UMPylation. The polypeptide is Protein nucleotidyltransferase YdiU (Nitrobacter winogradskyi (strain ATCC 25391 / DSM 10237 / CIP 104748 / NCIMB 11846 / Nb-255)).